We begin with the raw amino-acid sequence, 147 residues long: MVNLTAAEKTQVTNLWGKVNVKELGGEALSRLLVVYPWTRRFFEHFGDLSTADAVLHNAKVLAHGEKVLTSFGEGLKHLDNLKGTFADLSELHCDKLHVDPENFRLLGNVLVIVLARHFGKEFTPDVQAAYEKVVAGVANALAHKYH.

Positions Asn-3–His-147 constitute a Globin domain. Residues His-64 and His-93 each contribute to the heme b site.

The protein belongs to the globin family. Heterotetramer of two delta chains and two alpha chains. Red blood cells.

This is Hemoglobin subunit delta (HBD) from Elephas maximus (Indian elephant).